A 479-amino-acid polypeptide reads, in one-letter code: GTPase Obg (479 aa).

The Obg domain maps to 2–159 (TTFVDRVELH…QDIVLELKTV (158 aa)). A disordered region spans residues 61-87 (HHKPHRSATNGKPGEGGNRSGKDGQDL). The 172-residue stretch at 160–331 (ADVALVGYPS…LSFALAELVG (172 aa)) folds into the OBG-type G domain. Residues 166–173 (GYPSAGKS), 191–195 (FTTLV), 212–215 (DVPG), 283–286 (NKID), and 312–314 (SAV) each bind GTP. Mg(2+) contacts are provided by serine 173 and threonine 193. Positions 349-431 (PKAVDDAGFT…DNAVVFDWEP (83 aa)) constitute an OCT domain. Basic and acidic residues predominate over residues 440–453 (LGRRGEDHRLDEPR). A disordered region spans residues 440-479 (LGRRGEDHRLDEPRPAAQRRRDKQAERDDAEKEYDDFEPF). Acidic residues predominate over residues 470–479 (EKEYDDFEPF).

This sequence belongs to the TRAFAC class OBG-HflX-like GTPase superfamily. OBG GTPase family. In terms of assembly, monomer. It depends on Mg(2+) as a cofactor.

The protein resides in the cytoplasm. In terms of biological role, an essential GTPase which binds GTP, GDP and possibly (p)ppGpp with moderate affinity, with high nucleotide exchange rates and a fairly low GTP hydrolysis rate. Plays a role in control of the cell cycle, stress response, ribosome biogenesis and in those bacteria that undergo differentiation, in morphogenesis control. This is GTPase Obg from Streptomyces avermitilis (strain ATCC 31267 / DSM 46492 / JCM 5070 / NBRC 14893 / NCIMB 12804 / NRRL 8165 / MA-4680).